The primary structure comprises 445 residues: Histidinol dehydrogenase (445 aa).

Residues tyrosine 134, glutamine 198, and asparagine 226 each contribute to the NAD(+) site. Substrate-binding residues include threonine 249, glutamine 271, and histidine 274. Residues glutamine 271 and histidine 274 each coordinate Zn(2+). Active-site proton acceptor residues include glutamate 340 and histidine 341. Histidine 341, aspartate 374, glutamate 428, and histidine 433 together coordinate substrate. A Zn(2+)-binding site is contributed by aspartate 374. A Zn(2+)-binding site is contributed by histidine 433.

This sequence belongs to the histidinol dehydrogenase family. Zn(2+) is required as a cofactor.

It catalyses the reaction L-histidinol + 2 NAD(+) + H2O = L-histidine + 2 NADH + 3 H(+). Its pathway is amino-acid biosynthesis; L-histidine biosynthesis; L-histidine from 5-phospho-alpha-D-ribose 1-diphosphate: step 9/9. Its function is as follows. Catalyzes the sequential NAD-dependent oxidations of L-histidinol to L-histidinaldehyde and then to L-histidine. This chain is Histidinol dehydrogenase, found in Nocardia farcinica (strain IFM 10152).